The sequence spans 100 residues: Urease subunit gamma (100 aa).

It belongs to the urease gamma subunit family. In terms of assembly, heterotrimer of UreA (gamma), UreB (beta) and UreC (alpha) subunits. Three heterotrimers associate to form the active enzyme.

Its subcellular location is the cytoplasm. The catalysed reaction is urea + 2 H2O + H(+) = hydrogencarbonate + 2 NH4(+). It participates in nitrogen metabolism; urea degradation; CO(2) and NH(3) from urea (urease route): step 1/1. The protein is Urease subunit gamma of Jannaschia sp. (strain CCS1).